The chain runs to 415 residues: MASIGPATTTAVKLRSSIFNPQSSTLSPSQQCITFTKSLHSFPTATRHNVASGVRCMAAVGEAATETKARTRSKYEIETLTGWLLKQEMAGVIDAELTIVLSSISLACKQIASLVQRAGISNLTGIQGAVNIQGEDQKKLDVVSNEVFSSCLRSSGRTGIIASEEEDVPVAVEESYSGNYIVVFDPLDGSSNIDAAVSTGSIFGIYSPNDECIVDSDHDDESQLSAEEQRCVVNVCQPGDNLLAAGYCMYSSSVIFVLTIGKGVYAFTLDPMYGEFVLTSEKIQIPKAGKIYSFNEGNYKMWDDKLKKYMDDLKEPGESQKPYSSRYIGSLVGDFHRTLLYGGIYGYPRDAKSKNGKLRLLYECAPMSFIVEQAGGKGSDGHQRILDIQPTEIHQRVPLYIGSVEEVEKLEKYLA.

The transit peptide at 1-57 (MASIGPATTTAVKLRSSIFNPQSSTLSPSQQCITFTKSLHSFPTATRHNVASGVRCM) directs the protein to the chloroplast. Mg(2+) contacts are provided by E135, E164, D185, L187, and D188. Substrate is bound at residue 188-191 (DGSS). Residues 207–232 (SPNDECIVDSDHDDESQLSAEEQRCV) are involved in light regulation. C231 and C236 are oxidised to a cystine. Residues N295, Y327, Y345, Y347, and K357 each coordinate substrate. Position 363 (E363) interacts with Mg(2+).

The protein belongs to the FBPase class 1 family. In terms of assembly, homotetramer. Mg(2+) is required as a cofactor.

Its subcellular location is the plastid. The protein resides in the chloroplast. It carries out the reaction beta-D-fructose 1,6-bisphosphate + H2O = beta-D-fructose 6-phosphate + phosphate. It participates in carbohydrate biosynthesis; Calvin cycle. This Spinacia oleracea (Spinach) protein is Fructose-1,6-bisphosphatase, chloroplastic.